The following is a 260-amino-acid chain: Fibronectin type III domain-containing protein 5 (260 aa).

The interval 1–56 (MQAARGGAGRPERPGRPGRGPERERERPPGAGAASPCAAPGLPAGGATIHPGSPSA) is disordered. Residues 10 to 28 (RPERPGRPGRGPERERERP) are compositionally biased toward basic and acidic residues. Residues 29–56 (PGAGAASPCAAPGLPAGGATIHPGSPSA) are compositionally biased toward low complexity. In terms of domain architecture, Fibronectin type-III spans 84-175 (APVNVTVRHL…EPVLFKTPRE (92 aa)). N-linked (GlcNAc...) asparagine glycosylation is found at Asn-87 and Asn-132. Residues 201–221 (GEVLIIVVVLFMWAGVIALFC) form a helical membrane-spanning segment. Over residues 230-241 (NEPNNNKEKTKS) the composition is skewed to basic and acidic residues. The tract at residues 230–260 (NEPNNNKEKTKSASETSTPEHQGGGLLRSKI) is disordered. Positions 251 to 260 (QGGGLLRSKI) are enriched in gly residues. Residues 258-260 (SKI) carry the Microbody targeting signal motif.

In terms of assembly, dimer; may exist in other oligomeric forms. In terms of processing, the extracellular domain is cleaved and released from the cell membrane. N-Glycosylated. As to expression, widely expressed, with highest levels in heart. Very low expression, if any, in colon, pancreas and spleen.

It is found in the cell membrane. Its subcellular location is the peroxisome membrane. It localises to the secreted. Mediates beneficial effects of muscular exercise. Induces browning of white adipose tissue by stimulating UCP1 expression, at least in part, via the nuclear receptor PPARA. The chain is Fibronectin type III domain-containing protein 5 (FNDC5) from Homo sapiens (Human).